The chain runs to 269 residues: Indole-3-glycerol phosphate synthase (269 aa).

This sequence belongs to the TrpC family.

It catalyses the reaction 1-(2-carboxyphenylamino)-1-deoxy-D-ribulose 5-phosphate + H(+) = (1S,2R)-1-C-(indol-3-yl)glycerol 3-phosphate + CO2 + H2O. The protein operates within amino-acid biosynthesis; L-tryptophan biosynthesis; L-tryptophan from chorismate: step 4/5. In Streptomyces griseus subsp. griseus (strain JCM 4626 / CBS 651.72 / NBRC 13350 / KCC S-0626 / ISP 5235), this protein is Indole-3-glycerol phosphate synthase.